Reading from the N-terminus, the 368-residue chain is Cyclic GMP-AMP synthase-like receptor (368 aa).

Residues Ser60 and 72–74 each bind ATP; that span reads EYD. Mg(2+)-binding residues include Glu72, Asp74, and Asp190. Residues Asp190 and 229-236 contribute to the GTP site; that span reads RASFYRQE. ATP-binding positions include 233–236, Lys254, and 268–272; these read YRQE and SYFIK.

Belongs to the mab-21 family. The cofactor is Mg(2+). Mn(2+) serves as cofactor.

It carries out the reaction GTP + ATP = 3',2'-cGAMP + 2 diphosphate. It catalyses the reaction GTP + ATP = pppA(2'-5')pG + diphosphate. The catalysed reaction is pppA(2'-5')pG = 3',2'-cGAMP + diphosphate. The enzyme activity is specifically activated by double-stranded RNA (dsRNA). Its function is as follows. Nucleotidyltransferase that catalyzes the formation of cyclic GMP-AMP (3',2'-cGAMP) from ATP and GTP and plays a key role in innate immunity. Synthesizes 3',2'-cGAMP in a two-step reaction through production of the linear intermediate pppA(2'-5')pG. Acts as a key sensor of double-stranded RNA (dsRNA), the presence of dsRNA in the cytoplasm being a danger signal that triggers the immune responses. Directly binds dsRNA, activating the nucleotidyltransferase activity, leading to synthesis of 3',2'-cGAMP, a second messenger that binds to and activates Sting, thereby triggering the antiviral immune response via activation of the NF-kappa-B transcription factor Rel (Relish). In Lucilia cuprina (Green bottle fly), this protein is Cyclic GMP-AMP synthase-like receptor.